Here is a 301-residue protein sequence, read N- to C-terminus: Sulfate adenylyltransferase subunit 2 (301 aa).

Residues 279-301 (RQGRLIDRDEAGSMEKKKREGYF) are disordered.

Belongs to the PAPS reductase family. CysD subfamily. As to quaternary structure, heterodimer composed of CysD, the smaller subunit, and CysN.

The catalysed reaction is sulfate + ATP + H(+) = adenosine 5'-phosphosulfate + diphosphate. The protein operates within sulfur metabolism; hydrogen sulfide biosynthesis; sulfite from sulfate: step 1/3. With CysN forms the ATP sulfurylase (ATPS) that catalyzes the adenylation of sulfate producing adenosine 5'-phosphosulfate (APS) and diphosphate, the first enzymatic step in sulfur assimilation pathway. APS synthesis involves the formation of a high-energy phosphoric-sulfuric acid anhydride bond driven by GTP hydrolysis by CysN coupled to ATP hydrolysis by CysD. This Mesorhizobium japonicum (strain LMG 29417 / CECT 9101 / MAFF 303099) (Mesorhizobium loti (strain MAFF 303099)) protein is Sulfate adenylyltransferase subunit 2.